A 205-amino-acid chain; its full sequence is Cyanate hydratase (205 aa).

Catalysis depends on residues arginine 133, glutamate 136, and serine 159.

This sequence belongs to the cyanase family.

The catalysed reaction is cyanate + hydrogencarbonate + 3 H(+) = NH4(+) + 2 CO2. Catalyzes the reaction of cyanate with bicarbonate to produce ammonia and carbon dioxide. The protein is Cyanate hydratase of Thalassiosira pseudonana (Marine diatom).